The chain runs to 273 residues: Large ribosomal subunit protein uL2 (273 aa).

Disordered stretches follow at residues 28-53 (KPFAPLLEKNSKSGGRNNNGRITTRH) and 221-273 (RGTA…RRSK). Low complexity predominate over residues 39 to 48 (KSGGRNNNGR). Residue Lys-242 is modified to N6-acetyllysine.

It belongs to the universal ribosomal protein uL2 family. As to quaternary structure, part of the 50S ribosomal subunit. Forms a bridge to the 30S subunit in the 70S ribosome.

In terms of biological role, one of the primary rRNA binding proteins. Required for association of the 30S and 50S subunits to form the 70S ribosome, for tRNA binding and peptide bond formation. It has been suggested to have peptidyltransferase activity; this is somewhat controversial. Makes several contacts with the 16S rRNA in the 70S ribosome. The polypeptide is Large ribosomal subunit protein uL2 (Shigella dysenteriae serotype 1 (strain Sd197)).